A 323-amino-acid chain; its full sequence is Pathogenicity locus probable regulatory protein WtsA (323 aa).

The Sigma-54 factor interaction domain maps to 41 to 251; it reads VAPLEIDLVL…ELKTAAKRFT (211 aa). Residues 52–59 and 123–132 contribute to the ATP site; these read GETGTGKD and EIDSMPLSLQ. The segment at residues 293–312 is a DNA-binding region (H-T-H motif); that stretch reads IDEAAMELGMPLRTLYHRIK.

Positive activator of wtsB involved in plant pathogenicity. Probably interacts with sigma-54. In Pantoea stewartii subsp. stewartii (Erwinia stewartii), this protein is Pathogenicity locus probable regulatory protein WtsA (wtsA).